A 799-amino-acid chain; its full sequence is Histidine biosynthesis trifunctional protein (799 aa).

The segment at 1–229 (MVLPILPLID…FIVEQENVGF (229 aa)) is phosphoribosyl-AMP cyclohydrolase. Residues 230–312 (CHLETMSCFG…FYFALAKLVT (83 aa)) form a phosphoribosyl-ATP pyrophosphohydrolase region. The interval 313-799 (NNVSLKDVEN…KLGLIPKDFQ (487 aa)) is histidinol dehydrogenase. Residues glutamine 618 and histidine 621 each contribute to the Zn(2+) site. Active-site residues include glutamate 687 and histidine 688. Aspartate 721 and histidine 780 together coordinate Zn(2+).

This sequence in the C-terminal section; belongs to the histidinol dehydrogenase family. It depends on Zn(2+) as a cofactor.

It catalyses the reaction 1-(5-phospho-beta-D-ribosyl)-5'-AMP + H2O = 1-(5-phospho-beta-D-ribosyl)-5-[(5-phospho-beta-D-ribosylamino)methylideneamino]imidazole-4-carboxamide. The enzyme catalyses 1-(5-phospho-beta-D-ribosyl)-ATP + H2O = 1-(5-phospho-beta-D-ribosyl)-5'-AMP + diphosphate + H(+). It carries out the reaction L-histidinol + 2 NAD(+) + H2O = L-histidine + 2 NADH + 3 H(+). Its pathway is amino-acid biosynthesis; L-histidine biosynthesis; L-histidine from 5-phospho-alpha-D-ribose 1-diphosphate: step 2/9. The protein operates within amino-acid biosynthesis; L-histidine biosynthesis; L-histidine from 5-phospho-alpha-D-ribose 1-diphosphate: step 3/9. It functions in the pathway amino-acid biosynthesis; L-histidine biosynthesis; L-histidine from 5-phospho-alpha-D-ribose 1-diphosphate: step 9/9. The chain is Histidine biosynthesis trifunctional protein (HIS4) from Saccharomyces bayanus (Yeast).